Consider the following 392-residue polypeptide: Glutamate 5-kinase (392 aa).

An ATP-binding site is contributed by Lys17. Ser57, Asp144, and Asn156 together coordinate substrate. 176–177 (SD) serves as a coordination point for ATP. Residues 282-359 (AGILSVDAGA…AEIEALLGYA (78 aa)) enclose the PUA domain. The segment at 373–392 (TEQTGRKAGKSTKKKDEAHA) is disordered.

Belongs to the glutamate 5-kinase family.

The protein resides in the cytoplasm. The enzyme catalyses L-glutamate + ATP = L-glutamyl 5-phosphate + ADP. The protein operates within amino-acid biosynthesis; L-proline biosynthesis; L-glutamate 5-semialdehyde from L-glutamate: step 1/2. Catalyzes the transfer of a phosphate group to glutamate to form L-glutamate 5-phosphate. The sequence is that of Glutamate 5-kinase from Allorhizobium ampelinum (strain ATCC BAA-846 / DSM 112012 / S4) (Agrobacterium vitis (strain S4)).